Consider the following 203-residue polypeptide: MGSQWGKDKVYRRAMNEGFRSRAAYKLQEIQERFSIIREDDNIVDLGAAPGSWLQVERTLTKGKVLGVDLNPIPSIDGVMTVVGDLTTSEVQQQVKDLVGVVNVVLCDASPKLSGHKCYDQARAIGLGEDALMFAARTMKQGGNMAMKSFQGEMFHELLEEVKKHFYVVKTFHTKSTRRGSTEIYIVAKNFIGSSGDVEGHIQ.

S-adenosyl-L-methionine-binding residues include Gly51, Trp53, Asp69, Asp85, and Asp108. The active-site Proton acceptor is the Lys148.

This sequence belongs to the class I-like SAM-binding methyltransferase superfamily. RNA methyltransferase RlmE family.

The protein localises to the cytoplasm. It catalyses the reaction uridine(2552) in 23S rRNA + S-adenosyl-L-methionine = 2'-O-methyluridine(2552) in 23S rRNA + S-adenosyl-L-homocysteine + H(+). Its function is as follows. Specifically methylates the uridine in position 2552 of 23S rRNA at the 2'-O position of the ribose in the fully assembled 50S ribosomal subunit. This chain is Ribosomal RNA large subunit methyltransferase E, found in Methanosphaerula palustris (strain ATCC BAA-1556 / DSM 19958 / E1-9c).